The sequence spans 659 residues: Zinc finger protein 304 (659 aa).

In terms of domain architecture, KRAB spans 14 to 88; that stretch reads VTFEDVFVYF…TAESGLFQKA (75 aa). C2H2-type zinc fingers lie at residues 89–111, 115–139, 251–273, 279–301, 307–329, 335–357, 363–385, 391–413, 419–441, 447–469, 475–497, 503–525, 531–553, 559–581, 587–609, and 615–637; these read HPCE…QGSH, KLCT…QKQH, FRCL…RKIH, HVCK…QKFH, YTCS…QRVH, YDCS…QRIH, YKCN…QRFH, YECS…WRIH, YECI…RRVH, YVCS…QIIH, YECS…QKIH, YECG…QRIH, YECN…QRVH, YVCS…KKVH, YECS…QRVH, and YVCS…QKAH.

It belongs to the krueppel C2H2-type zinc-finger protein family. In terms of assembly, probably part of a corepressor complex containing ZNF304, TRIM28, SETDB1 and DNMT1; leading to promoter hypermethylation and transcriptional silencing. Probably associates with Polycomb group (PcG) complexes; leading to trimethylation of 'Lys-27' of histone H3 (H3K27me3). Interacts with USP28. In terms of processing, deubiquitinated by USP28; the deubiquitination leads to the stabilization of ZNF304 from proteolytic degradation. In terms of tissue distribution, expressed in undifferentiated embryonic stem cells (ESCs). Expressed strongly in colorectal cancers cells (CRCs). Expressed strongly in ovarian carcinoma (OC) tumor cell lines compared to non-transformed ovarian epithelial cells (at protein level). Expressed in lymphoid tissues, thyroid, adrenal gland, prostate, pancreas and skeletal muscles.

Its subcellular location is the nucleus. Acts as a transcriptional regulator and plays a role in gene silencing. Probably forms a corepressor complex required for activated KRAS-mediated promoter hypermethylation and transcriptional silencing of several tumor suppressor genes (TSGs) or other tumor-related genes in colorectal cancer (CRC) cells. Also required to maintain a transcriptionally repressive state of genes in undifferentiated embryonic stem cells (ESCs) by inducing trimethylation of 'Lys-27' of histone H3 (H3K27me3) in a Polycomb group (PcG) complexes-dependent manner. Associates at promoter regions of TSGs and mediates the recruitment of the corepressor complex containing the scaffolding protein TRIM28, methyltransferase DNMT1 and histone methyltransferase SETDB1 and/or the PcG complexes at those sites. Transcription factor involved in the metastatic cascade process by inducing cell migration and proliferation and gain resistance to anoikis of ovarian carcinoma (OC) cells via integrin-mediated signaling pathways. Associates with the ITGB1 promoter and positively regulates beta-1 integrin transcription expression. Promotes angiogenesis. Promotes tumor growth. The chain is Zinc finger protein 304 from Homo sapiens (Human).